Reading from the N-terminus, the 165-residue chain is Peptide methionine sulfoxide reductase MsrA (165 aa).

Cys10 is an active-site residue.

It belongs to the MsrA Met sulfoxide reductase family.

It carries out the reaction L-methionyl-[protein] + [thioredoxin]-disulfide + H2O = L-methionyl-(S)-S-oxide-[protein] + [thioredoxin]-dithiol. It catalyses the reaction [thioredoxin]-disulfide + L-methionine + H2O = L-methionine (S)-S-oxide + [thioredoxin]-dithiol. Its function is as follows. Has an important function as a repair enzyme for proteins that have been inactivated by oxidation. Catalyzes the reversible oxidation-reduction of methionine sulfoxide in proteins to methionine. The polypeptide is Peptide methionine sulfoxide reductase MsrA (Campylobacter jejuni (strain RM1221)).